The chain runs to 181 residues: Adenine phosphoribosyltransferase (181 aa).

It belongs to the purine/pyrimidine phosphoribosyltransferase family. Homodimer.

The protein resides in the cytoplasm. The enzyme catalyses AMP + diphosphate = 5-phospho-alpha-D-ribose 1-diphosphate + adenine. It functions in the pathway purine metabolism; AMP biosynthesis via salvage pathway; AMP from adenine: step 1/1. Catalyzes a salvage reaction resulting in the formation of AMP, that is energically less costly than de novo synthesis. The sequence is that of Adenine phosphoribosyltransferase from Vibrio campbellii (strain ATCC BAA-1116).